The sequence spans 104 residues: Gastrin (104 aa).

The signal sequence occupies residues 1-21 (MQRLCVYVLILALALATFSEA). The propeptide occupies 22 to 58 (SWKPRSRLQDAPSGPGANRGLEPHGLDQLGPASHHRR). Residues 22-70 (SWKPRSRLQDAPSGPGANRGLEPHGLDQLGPASHHRRQLGLQGPPQLVA) form a disordered region. Pyrrolidone carboxylic acid occurs at positions 59 and 76. Tyr87 bears the Sulfotyrosine mark. Phe92 carries the phenylalanine amide modification. Ser96 is subject to Phosphoserine. The propeptide occupies 96–104 (SAEEGDQRP).

Belongs to the gastrin/cholecystokinin family.

The protein localises to the secreted. Gastrin stimulates the stomach mucosa to produce and secrete hydrochloric acid and the pancreas to secrete its digestive enzymes. It also stimulates smooth muscle contraction and increases blood circulation and water secretion in the stomach and intestine. In Canis lupus familiaris (Dog), this protein is Gastrin (GAST).